The following is a 152-amino-acid chain: Aspartate carbamoyltransferase regulatory chain (152 aa).

Zn(2+) is bound by residues cysteine 109, cysteine 114, cysteine 138, and cysteine 141.

This sequence belongs to the PyrI family. Contains catalytic and regulatory chains. Zn(2+) is required as a cofactor.

In terms of biological role, involved in allosteric regulation of aspartate carbamoyltransferase. The polypeptide is Aspartate carbamoyltransferase regulatory chain (Thermoplasma volcanium (strain ATCC 51530 / DSM 4299 / JCM 9571 / NBRC 15438 / GSS1)).